The chain runs to 833 residues: Leucine--tRNA ligase (833 aa).

The short motif at 41 to 52 (PYPSGAGLHVGH) is the 'HIGH' region element. The short motif at 610 to 614 (KMSKS) is the 'KMSKS' region element. Residue K613 participates in ATP binding.

The protein belongs to the class-I aminoacyl-tRNA synthetase family.

The protein localises to the cytoplasm. The enzyme catalyses tRNA(Leu) + L-leucine + ATP = L-leucyl-tRNA(Leu) + AMP + diphosphate. This chain is Leucine--tRNA ligase, found in Streptococcus pneumoniae serotype 4 (strain ATCC BAA-334 / TIGR4).